Here is a 402-residue protein sequence, read N- to C-terminus: Multidrug resistance protein MdtH (402 aa).

Helical transmembrane passes span 13 to 33, 34 to 54, 99 to 116, 139 to 159, 165 to 185, 214 to 234, 243 to 263, 277 to 297, 300 to 320, 340 to 360, and 368 to 388; these read YFLL…FPLI, SIRF…ALGL, PWVL…GTLF, LLMM…SWLL, LVCG…AWLL, VLTL…LPVM, AAVK…LYPL, LMAG…ASNL, LFTL…ARET, LGLA…FDAG, and LPWA…WWQF.

This sequence belongs to the major facilitator superfamily. DHA1 family. MdtH (TC 2.A.1.2.21) subfamily.

The protein resides in the cell inner membrane. This Cronobacter sakazakii (strain ATCC BAA-894) (Enterobacter sakazakii) protein is Multidrug resistance protein MdtH.